The sequence spans 254 residues: Persulfide dioxygenase ETHE1, mitochondrial (254 aa).

Residues 1–7 constitute a mitochondrion transit peptide; the sequence is MASAVVR. Ser14, Ser17, and Ser19 each carry phosphoserine. Residue Lys32 is modified to N6-acetyllysine; alternate. Lys32 is subject to N6-succinyllysine; alternate. At Lys66 the chain carries N6-acetyllysine. Positions 79, 135, and 154 each coordinate Fe cation. An N6-acetyllysine; alternate modification is found at Lys172. An N6-succinyllysine; alternate modification is found at Lys172.

It belongs to the metallo-beta-lactamase superfamily. Glyoxalase II family. In terms of assembly, homodimer. Monomer. Interacts with TST. May interact with RELA. Fe(2+) is required as a cofactor.

It is found in the cytoplasm. Its subcellular location is the nucleus. The protein resides in the mitochondrion matrix. It catalyses the reaction S-sulfanylglutathione + O2 + H2O = sulfite + glutathione + 2 H(+). First described as a protein that can shuttle between the nucleus and the cytoplasm and suppress p53-induced apoptosis by sequestering the transcription factor RELA/NFKB3 in the cytoplasm and preventing its accumulation in the nucleus. Sulfur dioxygenase that plays an essential role in hydrogen sulfide catabolism in the mitochondrial matrix. Hydrogen sulfide (H(2)S) is first oxidized by SQRDL, giving rise to cysteine persulfide residues. ETHE1 consumes molecular oxygen to catalyze the oxidation of the persulfide, once it has been transferred to a thiophilic acceptor, such as glutathione (R-SSH). Plays an important role in metabolic homeostasis in mitochondria by metabolizing hydrogen sulfide and preventing the accumulation of supraphysiological H(2)S levels that have toxic effects, due to the inhibition of cytochrome c oxidase. The protein is Persulfide dioxygenase ETHE1, mitochondrial (Ethe1) of Mus musculus (Mouse).